A 1563-amino-acid chain; its full sequence is Pentafunctional AROM polypeptide (1563 aa).

Residues 1 to 382 are 3-dehydroquinate synthase; it reads MAEPISNPTR…YEPKASVVED (382 aa). NAD(+) is bound by residues 48 to 50, 82 to 85, 113 to 115, and Asp118; these read DTN, EYSK, and GGV. 7-phospho-2-dehydro-3-deoxy-D-arabino-heptonate is bound at residue Arg129. NAD(+) is bound at residue 138-139; that stretch reads TT. 7-phospho-2-dehydro-3-deoxy-D-arabino-heptonate-binding residues include Asp145 and Lys151. Lys160 is an NAD(+) binding site. Residue Asn161 coordinates 7-phospho-2-dehydro-3-deoxy-D-arabino-heptonate. Residues 178-181 and Asn189 contribute to the NAD(+) site; that span reads FLNT. Glu193 serves as a coordination point for Zn(2+). Residues 193-196 and Lys248 contribute to the 7-phospho-2-dehydro-3-deoxy-D-arabino-heptonate site; that span reads EVIK. Residue Glu258 is the Proton acceptor; for 3-dehydroquinate synthase activity of the active site. 7-phospho-2-dehydro-3-deoxy-D-arabino-heptonate-binding positions include 262–266 and His269; that span reads RNLLN. Residue His269 participates in Zn(2+) binding. His273 (proton acceptor; for 3-dehydroquinate synthase activity) is an active-site residue. His285 and Lys354 together coordinate 7-phospho-2-dehydro-3-deoxy-D-arabino-heptonate. His285 contacts Zn(2+). Residues 395 to 834 are EPSP synthase; that stretch reads VFAGVPKDLN…WDTMSNYFKV (440 aa). The active-site For EPSP synthase activity is Cys816. Residues 857–1051 are shikimate kinase; the sequence is PKSIFIIGMR…KKKPHSFFVS (195 aa). 864–871 contacts ATP; it reads GMRGAGKS. Residues 1052–1265 form a 3-dehydroquinase region; the sequence is LTVPNVSKAL…AAPGQLSAAE (214 aa). The Proton acceptor; for 3-dehydroquinate dehydratase activity role is filled by His1168. Catalysis depends on Lys1196, which acts as the Schiff-base intermediate with substrate; for 3-dehydroquinate dehydratase activity. The tract at residues 1278-1563 is shikimate dehydrogenase; sequence PRSFHLFGNP…TDAQAAVMGN (286 aa).

This sequence in the N-terminal section; belongs to the sugar phosphate cyclases superfamily. Dehydroquinate synthase family. It in the 2nd section; belongs to the EPSP synthase family. In the 3rd section; belongs to the shikimate kinase family. The protein in the 4th section; belongs to the type-I 3-dehydroquinase family. This sequence in the C-terminal section; belongs to the shikimate dehydrogenase family. Homodimer. Zn(2+) is required as a cofactor.

The protein resides in the cytoplasm. It carries out the reaction 7-phospho-2-dehydro-3-deoxy-D-arabino-heptonate = 3-dehydroquinate + phosphate. The enzyme catalyses 3-dehydroquinate = 3-dehydroshikimate + H2O. The catalysed reaction is shikimate + NADP(+) = 3-dehydroshikimate + NADPH + H(+). It catalyses the reaction shikimate + ATP = 3-phosphoshikimate + ADP + H(+). It carries out the reaction 3-phosphoshikimate + phosphoenolpyruvate = 5-O-(1-carboxyvinyl)-3-phosphoshikimate + phosphate. It participates in metabolic intermediate biosynthesis; chorismate biosynthesis; chorismate from D-erythrose 4-phosphate and phosphoenolpyruvate: step 2/7. Its pathway is metabolic intermediate biosynthesis; chorismate biosynthesis; chorismate from D-erythrose 4-phosphate and phosphoenolpyruvate: step 3/7. The protein operates within metabolic intermediate biosynthesis; chorismate biosynthesis; chorismate from D-erythrose 4-phosphate and phosphoenolpyruvate: step 4/7. It functions in the pathway metabolic intermediate biosynthesis; chorismate biosynthesis; chorismate from D-erythrose 4-phosphate and phosphoenolpyruvate: step 5/7. It participates in metabolic intermediate biosynthesis; chorismate biosynthesis; chorismate from D-erythrose 4-phosphate and phosphoenolpyruvate: step 6/7. In terms of biological role, the AROM polypeptide catalyzes 5 consecutive enzymatic reactions in prechorismate polyaromatic amino acid biosynthesis. This is Pentafunctional AROM polypeptide from Neurospora crassa (strain ATCC 24698 / 74-OR23-1A / CBS 708.71 / DSM 1257 / FGSC 987).